Consider the following 419-residue polypeptide: L-rhamnose isomerase (419 aa).

Residues H262, D294, and D296 each coordinate Mn(2+).

This sequence belongs to the rhamnose isomerase family. Homotetramer. The cofactor is Mn(2+).

Its subcellular location is the cytoplasm. The catalysed reaction is L-rhamnopyranose = L-rhamnulose. The protein operates within carbohydrate degradation; L-rhamnose degradation; glycerone phosphate from L-rhamnose: step 1/3. Catalyzes the interconversion of L-rhamnose and L-rhamnulose. The chain is L-rhamnose isomerase from Escherichia coli O17:K52:H18 (strain UMN026 / ExPEC).